The chain runs to 188 residues: dTTP/UTP pyrophosphatase (188 aa).

D67 (proton acceptor) is an active-site residue.

It belongs to the Maf family. YhdE subfamily. The cofactor is a divalent metal cation.

The protein resides in the cytoplasm. It carries out the reaction dTTP + H2O = dTMP + diphosphate + H(+). It catalyses the reaction UTP + H2O = UMP + diphosphate + H(+). Nucleoside triphosphate pyrophosphatase that hydrolyzes dTTP and UTP. May have a dual role in cell division arrest and in preventing the incorporation of modified nucleotides into cellular nucleic acids. In Thermococcus kodakarensis (strain ATCC BAA-918 / JCM 12380 / KOD1) (Pyrococcus kodakaraensis (strain KOD1)), this protein is dTTP/UTP pyrophosphatase.